A 163-amino-acid chain; its full sequence is Nucleotide-binding protein YPDSF_2805 (163 aa).

This sequence belongs to the YajQ family.

Nucleotide-binding protein. This chain is Nucleotide-binding protein YPDSF_2805, found in Yersinia pestis (strain Pestoides F).